The primary structure comprises 260 residues: Carbonic anhydrase 3 (260 aa).

An N-acetylalanine modification is found at A2. An Alpha-carbonic anhydrase domain is found at 3–259 (KEWGYASHNG…VKGRVVRASF (257 aa)). S29, S43, S48, S50, and S55 each carry phosphoserine. The involved in proton transfer stretch occupies residues 64–67 (KTCR). T73 bears the Phosphothreonine mark. Zn(2+)-binding residues include H94, H96, and H119. Y127 bears the Phosphotyrosine mark. Phosphothreonine is present on residues T129 and T176. Residues C182 and C187 each carry the S-glutathionyl cysteine modification. Residue 198–199 (TT) coordinates substrate. T216 carries the phosphothreonine modification. The residue at position 219 (S219) is a Phosphoserine.

The protein belongs to the alpha-carbonic anhydrase family. Zn(2+) serves as cofactor. In terms of processing, S-thiolated both by thiol-disulfide exchange with glutathione disulfide and by oxyradical-initiated S-thiolation with reduced glutathione. Post-translationally, S-glutathionylated in hepatocytes under oxidative stress. Expressed at lower levels in adipose tissue from animals that were either genetically obese or had experimentally induced obesity.

The protein localises to the cytoplasm. The enzyme catalyses hydrogencarbonate + H(+) = CO2 + H2O. Its activity is regulated as follows. Inhibited by acetazolamide. In terms of biological role, reversible hydration of carbon dioxide. The chain is Carbonic anhydrase 3 from Mus musculus (Mouse).